A 384-amino-acid polypeptide reads, in one-letter code: MNYNAKRVMRQNSVCVGSNDMAASPIMIGPAPPSAPSTPQLQTTEDIKPLLVQRQVILLQSGSIPTNPSPQQINLAGHNVAGGASGSNVANVLIPDDAPVSLLTEIADIMRSFGDSDQPRTGSVKLVEQILQQQLRGIFNEASLVAMRRKQNPCPSQADFEFLMRNHPVKIARMRKHLKDMRILKRFLSIRTGRPQDFMDDLEQQEEDEELAIDVYELHDEDRMRRLFRADRISQILTGQQYLEFNEARKTSFYCRHGEKIKNKFRRFLDLPADLRIPTPTMNILAYLAHETIAAIVDYSILTRLNSDNRATEPYSRVTSAGGSPAMMHVCPEVTQGRGMEVVKPISVPEIHEAMRRFRQMSSRKIGRYRNSCDIDFRRSFLAI.

This sequence belongs to the SPT3 family. As to quaternary structure, component of the Spt-Ada-Gcn5 acetyltransferase (SAGA) complex consisting of wda/Taf5L, Saf6, Taf9, Taf10b, Taf12, Ada1, Spt3, Spt7, Spt20, Sf3b3, Sf3b5, Nipped-A/Tra1, a histone acetyltransferase (HAT) module made up of Gcn5, Ada2b (Isoform B), Ada3 and Sgf29, and a deubiquitinase (DUB) module made up of not/nonstop, Sgf11 and e(y)2 tethered to SAGA by Atxn7. Taf5 and Taf10, which has partially redundant properties with Taf10b, may also be part of this complex.

It localises to the nucleus. The protein resides in the chromosome. Component of the transcription regulatory complex SAGA, a multiprotein complex that activates transcription by remodeling chromatin and mediating histone acetylation and deubiquitination. The SAGA complex predominantly acetylates histone H3. Required for oogenesis; involved in transcriptional activation. In Drosophila melanogaster (Fruit fly), this protein is SAGA complex subunit Spt3.